A 508-amino-acid polypeptide reads, in one-letter code: WD repeat-containing protein JIP5 (508 aa).

WD repeat units follow at residues 62–105 (EARK…WRTK), 106–145 (RHKG…VVKK), 149–188 (DGGS…TKNT), 193–233 (HGGD…MKQP), 253–294 (DQED…LEDQ), and 345–382 (SGLD…NSDS). Residues 376–508 (KEENSDSDSD…SHGITKFDGL (133 aa)) form a disordered region. Residues 380 to 393 (SDSDSDSDINDDSE) are compositionally biased toward acidic residues. The span at 407 to 419 (ELGSGSESEVESD) shows a compositional bias: low complexity. The WD 7 repeat unit spans residues 431-472 (CTGSDLPGDIEGSEGENNSNDDDNHDDREELWKELDQPTSDE). Residues 441–454 (EGSEGENNSNDDDN) are compositionally biased toward acidic residues. A compositionally biased stretch (basic and acidic residues) spans 455 to 466 (HDDREELWKELD). Residues 478 to 492 (KRSLKVKDKKNKKFK) show a composition bias toward basic residues.

The protein belongs to the WD repeat WDR55 family.

The protein localises to the nucleus. It is found in the nucleolus. In Candida glabrata (strain ATCC 2001 / BCRC 20586 / JCM 3761 / NBRC 0622 / NRRL Y-65 / CBS 138) (Yeast), this protein is WD repeat-containing protein JIP5 (JIP5).